The chain runs to 585 residues: ATP-dependent lipid A-core flippase (585 aa).

The next 6 membrane-spanning stretches (helical) occupy residues 23 to 43 (LAFG…AYVI), 64 to 84 (IAAY…FMGT), 140 to 160 (AFLT…WMFY), 163 to 183 (WQLS…VSVV), 247 to 267 (ILSV…VLYI), and 273 to 293 (FITD…TMLL). Residues 27–308 (VAIIGMVGYS…LTTVNSEFQK (282 aa)) form the ABC transmembrane type-1 domain. An ABC transporter domain is found at 340–576 (LEFRDVTFHY…DGAYAQLHKL (237 aa)). Position 374–381 (374–381 (GRSGSGKS)) interacts with ATP.

It belongs to the ABC transporter superfamily. Lipid exporter (TC 3.A.1.106) family. Homodimer.

It is found in the cell inner membrane. It catalyses the reaction ATP + H2O + lipid A-core oligosaccharideSide 1 = ADP + phosphate + lipid A-core oligosaccharideSide 2.. In terms of biological role, involved in lipopolysaccharide (LPS) biosynthesis. Translocates lipid A-core from the inner to the outer leaflet of the inner membrane. Transmembrane domains (TMD) form a pore in the inner membrane and the ATP-binding domain (NBD) is responsible for energy generation. This chain is ATP-dependent lipid A-core flippase, found in Pseudoalteromonas atlantica (strain T6c / ATCC BAA-1087).